Here is a 134-residue protein sequence, read N- to C-terminus: Profilin (134 aa).

The protein belongs to the profilin family. As to quaternary structure, occurs in many kinds of cells as a complex with monomeric actin in a 1:1 ratio.

It localises to the cytoplasm. It is found in the cytoskeleton. In terms of biological role, binds to actin and affects the structure of the cytoskeleton. At high concentrations, profilin prevents the polymerization of actin, whereas it enhances it at low concentrations. By binding to PIP2, it inhibits the formation of IP3 and DG. This Brassica napus (Rape) protein is Profilin.